Reading from the N-terminus, the 614-residue chain is MALLEKLHRRIVDMGLVPRIIALLPVISMLCALFGFISIAILPMDGQYRRTYISENALMPSQAYSYFRESEWNILRGYRSQIKEMVNMTSMERNNLMGSWLQEFGTKTAIYENEQYGETLYGVMHAPRGDGTEAMVLAVPWFNSDDEFNIGGAALGVSLARFFSRWPVWSKNIIVVFSENPRAALRSWVEAYHTSLDLTGGSIEAAVVLDYSSTEDFFEYVEISYDGLNGELPNLDLVNIAISITEHEGMKVSLHGLPSDQLTNNNFWSRLKILCLGIRDWALSGVKKPHGNEAFSGWRIQSVTLKAHGNSGHDITTFGRIPEAMFRSINNLLEKFHQSFFFYLLLAPRQFVSISSYLPSAVALSIAFAISSLNAFINNAYANISLFSEYNLVALLVWFVSLVISFVVSQAFLLIPSSGLLMTISMASCFLPLILSRKIHISEPLSYRLKNVAFLYFSLVSTSLLMINFAMALLIGTLAFPMTFVKTIVESSSEHEVTTQSSNPIKTEPKDEIELVENHMDTTPATPQQQKQKLKNLVLLILTNPFISITLFGLFFDDEFHGFDIINKLVSAWLDLKCWSWFVLCIGWLPCWLLILASSFESKSVVVRSKEKQS.

Residues 1 to 19 (MALLEKLHRRIVDMGLVPR) are Cytoplasmic-facing. Residues 20-40 (IIALLPVISMLCALFGFISIA) form a helical membrane-spanning segment. The Lumenal segment spans residues 41 to 356 (ILPMDGQYRR…APRQFVSISS (316 aa)). Asn87 carries N-linked (GlcNAc...) asparagine glycosylation. A helical membrane pass occupies residues 357–377 (YLPSAVALSIAFAISSLNAFI). Over 378 to 394 (NNAYANISLFSEYNLVA) the chain is Cytoplasmic. A helical transmembrane segment spans residues 395 to 415 (LLVWFVSLVISFVVSQAFLLI). Topologically, residues 416-464 (PSSGLLMTISMASCFLPLILSRKIHISEPLSYRLKNVAFLYFSLVSTSL) are lumenal. A helical transmembrane segment spans residues 465–485 (LMINFAMALLIGTLAFPMTFV). The Cytoplasmic portion of the chain corresponds to 486–535 (KTIVESSSEHEVTTQSSNPIKTEPKDEIELVENHMDTTPATPQQQKQKLK). The chain crosses the membrane as a helical span at residues 536-556 (NLVLLILTNPFISITLFGLFF). Topologically, residues 557–577 (DDEFHGFDIINKLVSAWLDLK) are lumenal. A helical membrane pass occupies residues 578–598 (CWSWFVLCIGWLPCWLLILAS). The Cytoplasmic segment spans residues 599–614 (SFESKSVVVRSKEKQS). A Prevents secretion from ER motif is present at residues 610-614 (KEKQS).

As to quaternary structure, forms a complex with CDC91, GPI17, GPI16 and GPI8.

Its subcellular location is the endoplasmic reticulum membrane. It participates in glycolipid biosynthesis; glycosylphosphatidylinositol-anchor biosynthesis. Functionally, component of the GPI transamidase complex. Required for a terminal step of GPI anchor attachment onto proteins. Affects endocytosis. The chain is GPI transamidase component GAA1 (GAA1) from Saccharomyces cerevisiae (strain ATCC 204508 / S288c) (Baker's yeast).